A 420-amino-acid polypeptide reads, in one-letter code: MQCSWKAVILLALVSIAIQYTAIRTFTAKPFHICPVPNPLNCGLGQDVESFDRMCDEYPYFNYNSSRKTHILILATTRSGSSFVGQLFNQHSDVFYLFEPLYHVQTTLIPHLSPSRYAVERRVMLGASRDLLRSLYNCDLYFLESYIKPQPANHTTDKLFRRGASKALCSMPVCDAFSPNDGNIEEGDCVRKCASLNLTLATESCRERRHVAIKTVRIPEVNDLKALIEDPRLNLKVIQLVRDPRGILSSRIETFRDTYRLWRIWRATGRKPYNLDLTQLTTVCDDFLNSVSTGLSRPPWLRGRYMLVRYEDLARNPLQKTKEVYEFLGLSLEKGVVDWIHNNTRGNNDVSAKHKYGTLRDSAANAESWRLKLSHDIVDYTQTVCQHILDELGYKAVNSPEELKNMSISLIEDKTFIPFL.

Methionine 1 is a topological domain (cytoplasmic). The chain crosses the membrane as a helical; Signal-anchor for type II membrane protein span at residues 2–23; it reads QCSWKAVILLALVSIAIQYTAI. Residues 24–420 are Lumenal-facing; the sequence is RTFTAKPFHI…IEDKTFIPFL (397 aa). The N-linked (GlcNAc...) asparagine glycan is linked to asparagine 64. 77–83 lines the 3'-phosphoadenylyl sulfate pocket; it reads TRSGSSF. Asparagine 153 and asparagine 197 each carry an N-linked (GlcNAc...) asparagine glycan. 242–250 contacts 3'-phosphoadenylyl sulfate; it reads RDPRGILSS. Residues asparagine 342 and asparagine 405 are each glycosylated (N-linked (GlcNAc...) asparagine).

Belongs to the sulfotransferase 1 family. Gal/GlcNAc/GalNAc subfamily.

It is found in the golgi apparatus membrane. It catalyses the reaction 3'-phosphoadenylyl sulfate + keratan = adenosine 3',5'-bisphosphate + keratan 6'-sulfate.. Sulfotransferase that utilizes 3'-phospho-5'-adenylyl sulfate (PAPS) as sulfonate donor to catalyze the transfer of sulfate to position 6 of galactose (Gal) residues of keratan. This is Carbohydrate sulfotransferase 1 (chst1) from Danio rerio (Zebrafish).